Here is a 465-residue protein sequence, read N- to C-terminus: Ribulose bisphosphate carboxylase large chain (465 aa).

Lysine 4 carries the N6,N6,N6-trimethyllysine modification. The substrate site is built by asparagine 113 and threonine 163. Lysine 165 (proton acceptor) is an active-site residue. Lysine 167 is a binding site for substrate. 3 residues coordinate Mg(2+): lysine 191, aspartate 193, and glutamate 194. Lysine 191 is modified (N6-carboxylysine). Histidine 284 functions as the Proton acceptor in the catalytic mechanism. Substrate is bound by residues arginine 285, histidine 317, and serine 369.

It belongs to the RuBisCO large chain family. Type I subfamily. In terms of assembly, heterohexadecamer of 8 large chains and 8 small chains. Requires Mg(2+) as cofactor.

The protein localises to the plastid. It is found in the chloroplast. It carries out the reaction 2 (2R)-3-phosphoglycerate + 2 H(+) = D-ribulose 1,5-bisphosphate + CO2 + H2O. It catalyses the reaction D-ribulose 1,5-bisphosphate + O2 = 2-phosphoglycolate + (2R)-3-phosphoglycerate + 2 H(+). Functionally, ruBisCO catalyzes two reactions: the carboxylation of D-ribulose 1,5-bisphosphate, the primary event in carbon dioxide fixation, as well as the oxidative fragmentation of the pentose substrate in the photorespiration process. Both reactions occur simultaneously and in competition at the same active site. The chain is Ribulose bisphosphate carboxylase large chain from Sarracenia flava (Yellow pitcher plant).